The primary structure comprises 128 residues: Small ribosomal subunit protein eS8 (128 aa).

The disordered stretch occupies residues 1-37 (MGYFQGNDFRKITGGKKGKHRDKRKFELGSPPTETKL). A compositionally biased stretch (basic residues) spans 13–23 (TGGKKGKHRDK).

It belongs to the eukaryotic ribosomal protein eS8 family. In terms of assembly, part of the 30S ribosomal subunit.

This Sulfurisphaera tokodaii (strain DSM 16993 / JCM 10545 / NBRC 100140 / 7) (Sulfolobus tokodaii) protein is Small ribosomal subunit protein eS8.